The following is a 2147-amino-acid chain: Probable serine/threonine-protein kinase roco6 (2147 aa).

The Extracellular portion of the chain corresponds to 1 to 1055 (MNSIHKQHYT…LDHSRVEFNR (1055 aa)). LRR repeat units follow at residues 69–89 (DMKY…MMIP), 101–122 (SISI…LKQL), 124–145 (QLIS…FPEE), 148–169 (LLRK…FNKF), 171–192 (ILED…LFPE), 193–214 (GIMR…PWFE), 215–236 (SLLT…PFHL), 237–256 (VRVS…VILR), 306–328 (HLTH…ANLT), 329–350 (ELVR…IVSY), and 352–372 (RLEH…PRRI). Residues 390-750 (QGEPSYRVKL…DLLKKTVVEL (361 aa)) form the Roc domain. Positions 390 to 750 (QGEPSYRVKL…DLLKKTVVEL (361 aa)) are small GTPase-like. Residue 403-410 (GQENVGKT) coordinates GTP. 2 disordered regions span residues 491 to 582 (NSNG…VGTN) and 602 to 621 (SNLS…GGSG). Low complexity-rich tracts occupy residues 492–512 (SNGV…NIHS), 519–531 (NVNS…SNNS), 539–568 (NSFL…NVNS), and 602–617 (SNLS…NNNS). Residues 634-638 (DCAGQ) and 691-694 (THLD) contribute to the GTP site. The COR domain occupies 758-892 (PELYLKLEKL…RFELMFPLDS (135 aa)). Low complexity-rich tracts occupy residues 905–941 (GNSY…SPST) and 960–977 (SGNN…RSIS). The tract at residues 905 to 995 (GNSYVNNNNN…NSDLDLIGGG (91 aa)) is disordered. The stretch at 1051–1098 (VEFNRWIQLSFAPAGLFSRLLIRLLISKEFDMKPILYWRNGVVVESQS) is one WD 1 repeat. Residues 1056–1076 (WIQLSFAPAGLFSRLLIRLLI) traverse the membrane as a helical segment. Topologically, residues 1077 to 2147 (SKEFDMKPIL…CGTNNVCIWS (1071 aa)) are cytoplasmic. 3 LRR repeats span residues 1237–1263 (ILSI…PPPP), 1274–1297 (DDNI…GSQP), and 1325–1348 (ESSL…TYKY). One can recognise a Protein kinase domain in the interval 1356 to 1627 (FESPKLIGRG…KIVKRIKQII (272 aa)). ATP-binding positions include 1362–1370 (IGRGASGKI) and Lys-1383. Asp-1481 (proton acceptor) is an active-site residue. The interval 1653–1699 (ADSQPFHYHQQQQPSLNSTNQLQQQQYSSVLTSPRSNLSDSSNSSQN) is disordered. The segment covering 1662–1699 (QQQQPSLNSTNQLQQQQYSSVLTSPRSNLSDSSNSSQN) has biased composition (low complexity). 2 WD repeats span residues 1735-1774 (QPEA…QIFR) and 1778-1820 (LHPG…LDDQ). One can recognise a PH domain in the interval 1821–1923 (SGTKSDFITK…WLTAINRVIN (103 aa)). The WD 4 repeat unit spans residues 2031–2068 (HYSKPITSMALVEKNVWISCEDESLSVWDGDTGSFIRK).

This sequence belongs to the protein kinase superfamily. TKL Ser/Thr protein kinase family. ROCO subfamily.

Its subcellular location is the membrane. It catalyses the reaction L-seryl-[protein] + ATP = O-phospho-L-seryl-[protein] + ADP + H(+). The enzyme catalyses L-threonyl-[protein] + ATP = O-phospho-L-threonyl-[protein] + ADP + H(+). In terms of biological role, may act as a serine/threonine-protein kinase and guanine-nucleotide releasing factor. The protein is Probable serine/threonine-protein kinase roco6 (roco6) of Dictyostelium discoideum (Social amoeba).